A 284-amino-acid chain; its full sequence is MDGRAVAPAAGTVLNALATGVGAAFALDIDTEASVSVTPSESGVSGEIAGHPEADTALVERCVSRVIDRYGDGQGGHVRTESEVPLAAGLKSSSAAANATVLATLDALGVADEVDRVDAARLGVQAARDAGVTVTGAFDDAAASMLGGVAMTDNREDDLLFRDAVEWHAAVWTPPERAYSADADVARCERVSGLAEHVAALAAAGDYGTAMTVNGLAFCAALDFPTAPAVTALPHAAGVSLSGTGPSYVAVGDEDGIEEVSTRWHENPGTVRETTTQLAGARTT.

85-95 (PLAAGLKSSSA) contributes to the ATP binding site.

This sequence belongs to the GHMP kinase family. Archaeal shikimate kinase subfamily.

It is found in the cytoplasm. It catalyses the reaction shikimate + ATP = 3-phosphoshikimate + ADP + H(+). The protein operates within metabolic intermediate biosynthesis; chorismate biosynthesis; chorismate from D-erythrose 4-phosphate and phosphoenolpyruvate: step 5/7. In Halobacterium salinarum (strain ATCC 29341 / DSM 671 / R1), this protein is Shikimate kinase.